The chain runs to 625 residues: Basic helix-loop-helix ARNT-like protein 1 (625 aa).

The interval 1 to 60 is disordered; it reads MADQRMDISSTISDFMSPGPTDLLSSSLGTSGVDCNRKRKGSSTDYQESMDTDKDDPHGR. Serine 17 carries the post-translational modification Phosphoserine; by GSK3-beta. Low complexity predominate over residues 17–32; that stretch reads SPGPTDLLSSSLGTSG. At threonine 21 the chain carries Phosphothreonine; by GSK3-beta. The Nuclear localization signal motif lies at 36 to 41; that stretch reads NRKRKG. Positions 51–60 are enriched in basic and acidic residues; the sequence is DTDKDDPHGR. Residues 72–125 form the bHLH domain; that stretch reads NAREAHSQIEKRRRDKMNSFIDELASLVPTCNAMSRKLDKLTVLRMAVQHMKTL. Serine 78 bears the Phosphoserine mark. A Phosphoserine; by CK2 modification is found at serine 90. A Nuclear export signal 1 motif is present at residues 142 to 152; the sequence is LSDDELKHLIL. The region spanning 143–215 is the PAS 1 domain; it reads SDDELKHLIL…EQLSSSDTAP (73 aa). Lysine 252 is covalently cross-linked (Glycyl lysine isopeptide (Lys-Gly) (interchain with G-Cter in SUMO2 and SUMO3)). Lysine 259 participates in a covalent cross-link: Glycyl lysine isopeptide (Lys-Gly) (interchain with G-Cter in SUMO); alternate. Lysine 259 participates in a covalent cross-link: Glycyl lysine isopeptide (Lys-Gly) (interchain with G-Cter in SUMO2); alternate. The PAS 2 domain maps to 325 to 395; sequence PQPVNGEIRV…ECHRQVLQTR (71 aa). Positions 360 to 368 match the Nuclear export signal 2 motif; that stretch reads LAYLPQELL. The PAC domain maps to 400 to 443; that stretch reads TNCYKFKIKDGSFITLRSRWFSFMNPWTKEVEYIVSTNTVVLAN. Disordered stretches follow at residues 454 to 491 and 510 to 594; these read QLTASPRSMDSMLPSGEGGPKRTHPTVPGIPGGTRAGA and GSSP…SPSN. An interaction with CIART region spans residues 507 to 587; the sequence is RIRGSSPSSC…IGIDMIDNDQ (81 aa). Residues 510–520 are compositionally biased toward low complexity; sequence GSSPSSCGSSP. Lysine 537 is modified (N6-acetyllysine).

In terms of assembly, component of the circadian clock oscillator which includes the CRY1/2 proteins, CLOCK or NPAS2, BMAL1 or BMAL2, CSNK1D and/or CSNK1E, TIMELESS and the PER1/2/3 proteins. Forms a heterodimer with CLOCK. The CLOCK-BMAL1 heterodimer is required for E-box-dependent transactivation, for CLOCK nuclear translocation and degradation, and, for phosphorylation of both CLOCK and BMAL1. Part of a nuclear complex which also includes RACK1 and PRKCA; RACK1 and PRKCA are recruited to the complex in a circadian manner. Interacts with NPAS2. Interacts with EZH2. Interacts with SUMO3. Interacts with SIRT1. Interacts with AHR. Interacts with ID1, ID2 and ID3. Interacts with DDX4. Interacts with OGT. Interacts with EED and SUZ12. Interacts with MTA1. Interacts with CIART. Interacts with HSP90. Interacts with KAT2B and EP300. Interacts with BHLHE40/DEC1 and BHLHE41/DEC2. Interacts with RELB and the interaction is enhanced in the presence of CLOCK. Interacts with PER1, PER2, CRY1 and CRY2 and this interaction requires a translocation to the nucleus. Interaction of the CLOCK-BMAL1 heterodimer with PER or CRY inhibits transcription activation. Interaction of the CLOCK-BMAL1 with CRY1 is independent of DNA but with PER2 is off DNA. The CLOCK-BMAL1 heterodimer interacts with GSK3B. Interacts with KDM5A. Interacts with KMT2A; in a circadian manner. Interacts with UBE3A. Interacts with PRKCG. Interacts with MAGEL2. Interacts with NCOA2. Interacts with THRAP3. The CLOCK-BMAL1 heterodimer interacts with PASD1. Interacts with PASD1. Interacts with USP9X. Interacts with PIWIL2 (via PIWI domain). Interacts with HDAC3. Interacts with HNF4A. In terms of processing, ubiquitinated, leading to its proteasomal degradation. Deubiquitinated by USP9X. O-glycosylated; contains O-GlcNAc. O-glycosylation by OGT prevents protein degradation by inhibiting ubiquitination. It also stabilizes the CLOCK-BMAL1 heterodimer thereby increasing CLOCK-BMAL1-mediated transcription of genes in the negative loop of the circadian clock such as PER1/2/3 and CRY1/2. Post-translationally, acetylated on Lys-537 by CLOCK during the repression phase of the circadian cycle. Acetylation facilitates recruitment of CRY1 protein and initiates the repression phase of the circadian cycle. Acetylated at Lys-537 by KAT5 during the activation phase of the cycle, leading to recruitment of the positive transcription elongation factor b (P-TEFb) and BRD4, followed by productive elongation of circadian transcripts. Deacetylated by SIRT1, which may result in decreased protein stability. In terms of processing, phosphorylated upon dimerization with CLOCK. Phosphorylation enhances the transcriptional activity, alters the subcellular localization and decreases the stability of the CLOCK-BMAL1 heterodimer by promoting its degradation. Phosphorylation shows circadian variations in the liver with a peak between CT10 to CT14. Phosphorylation at Ser-90 by CK2 is essential for its nuclear localization, its interaction with CLOCK and controls CLOCK nuclear entry. Dephosphorylation at Ser-78 is important for dimerization with CLOCK and transcriptional activity. Sumoylated on Lys-259 upon dimerization with CLOCK. Predominantly conjugated to poly-SUMO2/3 rather than SUMO1 and the level of these conjugates undergo rhythmic variation, peaking at CT9-CT12. Sumoylation localizes it exclusively to the PML body and promotes its ubiquitination in the PML body, ubiquitin-dependent proteasomal degradation and the transcriptional activity of the CLOCK-BMAL1 heterodimer. Post-translationally, undergoes lysosome-mediated degradation in a time-dependent manner in the liver.

Its subcellular location is the nucleus. The protein resides in the cytoplasm. It localises to the PML body. Its function is as follows. Transcriptional activator which forms a core component of the circadian clock. The circadian clock, an internal time-keeping system, regulates various physiological processes through the generation of approximately 24 hour circadian rhythms in gene expression, which are translated into rhythms in metabolism and behavior. It is derived from the Latin roots 'circa' (about) and 'diem' (day) and acts as an important regulator of a wide array of physiological functions including metabolism, sleep, body temperature, blood pressure, endocrine, immune, cardiovascular, and renal function. Consists of two major components: the central clock, residing in the suprachiasmatic nucleus (SCN) of the brain, and the peripheral clocks that are present in nearly every tissue and organ system. Both the central and peripheral clocks can be reset by environmental cues, also known as Zeitgebers (German for 'timegivers'). The predominant Zeitgeber for the central clock is light, which is sensed by retina and signals directly to the SCN. The central clock entrains the peripheral clocks through neuronal and hormonal signals, body temperature and feeding-related cues, aligning all clocks with the external light/dark cycle. Circadian rhythms allow an organism to achieve temporal homeostasis with its environment at the molecular level by regulating gene expression to create a peak of protein expression once every 24 hours to control when a particular physiological process is most active with respect to the solar day. Transcription and translation of core clock components (CLOCK, NPAS2, BMAL1, BMAL2, PER1, PER2, PER3, CRY1 and CRY2) plays a critical role in rhythm generation, whereas delays imposed by post-translational modifications (PTMs) are important for determining the period (tau) of the rhythms (tau refers to the period of a rhythm and is the length, in time, of one complete cycle). A diurnal rhythm is synchronized with the day/night cycle, while the ultradian and infradian rhythms have a period shorter and longer than 24 hours, respectively. Disruptions in the circadian rhythms contribute to the pathology of cardiovascular diseases, cancer, metabolic syndromes and aging. A transcription/translation feedback loop (TTFL) forms the core of the molecular circadian clock mechanism. Transcription factors, CLOCK or NPAS2 and BMAL1 or BMAL2, form the positive limb of the feedback loop, act in the form of a heterodimer and activate the transcription of core clock genes and clock-controlled genes (involved in key metabolic processes), harboring E-box elements (5'-CACGTG-3') within their promoters. The core clock genes: PER1/2/3 and CRY1/2 which are transcriptional repressors form the negative limb of the feedback loop and interact with the CLOCK|NPAS2-BMAL1|BMAL2 heterodimer inhibiting its activity and thereby negatively regulating their own expression. This heterodimer also activates nuclear receptors NR1D1/2 and RORA/B/G, which form a second feedback loop and which activate and repress BMAL1 transcription, respectively. BMAL1 positively regulates myogenesis and negatively regulates adipogenesis via the transcriptional control of the genes of the canonical Wnt signaling pathway. Plays a role in normal pancreatic beta-cell function; regulates glucose-stimulated insulin secretion via the regulation of antioxidant genes NFE2L2/NRF2 and its targets SESN2, PRDX3, CCLC and CCLM. Negatively regulates the mTORC1 signaling pathway; regulates the expression of MTOR and DEPTOR. Controls diurnal oscillations of Ly6C inflammatory monocytes; rhythmic recruitment of the PRC2 complex imparts diurnal variation to chemokine expression that is necessary to sustain Ly6C monocyte rhythms. Regulates the expression of HSD3B2, STAR, PTGS2, CYP11A1, CYP19A1 and LHCGR in the ovary and also the genes involved in hair growth. Plays an important role in adult hippocampal neurogenesis by regulating the timely entry of neural stem/progenitor cells (NSPCs) into the cell cycle and the number of cell divisions that take place prior to cell-cycle exit. Regulates the circadian expression of CIART and KLF11. The CLOCK-BMAL1 heterodimer regulates the circadian expression of SERPINE1/PAI1, VWF, B3, CCRN4L/NOC, NAMPT, DBP, MYOD1, PPARGC1A, PPARGC1B, SIRT1, GYS2, F7, NGFR, GNRHR, BHLHE40/DEC1, ATF4, MTA1, KLF10 and also genes implicated in glucose and lipid metabolism. Promotes rhythmic chromatin opening, regulating the DNA accessibility of other transcription factors. The NPAS2-BMAL1 heterodimer positively regulates the expression of MAOA, F7 and LDHA and modulates the circadian rhythm of daytime contrast sensitivity by regulating the rhythmic expression of adenylate cyclase type 1 (ADCY1) in the retina. The preferred binding motif for the CLOCK-BMAL1 heterodimer is 5'-CACGTGA-3', which contains a flanking adenine nucleotide at the 3-prime end of the canonical 6-nucleotide E-box sequence. CLOCK specifically binds to the half-site 5'-CAC-3', while BMAL1 binds to the half-site 5'-GTGA-3'. The CLOCK-BMAL1 heterodimer also recognizes the non-canonical E-box motifs 5'-AACGTGA-3' and 5'-CATGTGA-3'. Essential for the rhythmic interaction of CLOCK with ASS1 and plays a critical role in positively regulating CLOCK-mediated acetylation of ASS1. Plays a role in protecting against lethal sepsis by limiting the expression of immune checkpoint protein CD274 in macrophages in a PKM2-dependent manner. Regulates the diurnal rhythms of skeletal muscle metabolism via transcriptional activation of genes promoting triglyceride synthesis (DGAT2) and metabolic efficiency (COQ10B). This Pongo abelii (Sumatran orangutan) protein is Basic helix-loop-helix ARNT-like protein 1 (BMAL1).